Consider the following 235-residue polypeptide: Orotidine 5'-phosphate decarboxylase (235 aa).

Residues aspartate 10, lysine 33, 60–69, threonine 123, arginine 185, glutamine 194, glycine 214, and arginine 215 each bind substrate; that span reads DLKMNDIPNT. Catalysis depends on lysine 62, which acts as the Proton donor.

The protein belongs to the OMP decarboxylase family. Type 1 subfamily. In terms of assembly, homodimer.

The enzyme catalyses orotidine 5'-phosphate + H(+) = UMP + CO2. Its pathway is pyrimidine metabolism; UMP biosynthesis via de novo pathway; UMP from orotate: step 2/2. Functionally, catalyzes the decarboxylation of orotidine 5'-monophosphate (OMP) to uridine 5'-monophosphate (UMP). The polypeptide is Orotidine 5'-phosphate decarboxylase (Lactobacillus johnsonii (strain CNCM I-12250 / La1 / NCC 533)).